A 606-amino-acid chain; its full sequence is Protein spire homolog 2 (606 aa).

The KIND domain occupies 21–219; the sequence is LSLEEVLKSY…RALFLETLEL (199 aa). Residues 147-181 form a disordered region; it reads KHCGSNAAKDEGYSGQDEEEEEEEEEEEEGAGRGI. Acidic residues predominate over residues 162–175; sequence QDEEEEEEEEEEEE. WH2 domains are found at residues 263 to 277 and 357 to 374; these read QLMKELRQGVKLKKV and LHDRVLAEIRQDHKLRPV. Disordered regions lie at residues 438 to 464 and 517 to 537; these read DEDSPDGVDMRRVESSPTPLKRDRSFS and CRSLSSDDRSSDPGGDSASHG. A compositionally biased stretch (basic and acidic residues) spans 445-464; it reads VDMRRVESSPTPLKRDRSFS. The segment at 554 to 574 is spir-box; the sequence is LALTVDGVINVRRILVKAEME.

This sequence belongs to the spire family.

Its subcellular location is the cytoplasm. It localises to the cytoskeleton. The protein localises to the cytosol. The protein resides in the cell membrane. It is found in the cytoplasmic vesicle membrane. Its function is as follows. Acts as an actin nucleation factor, remains associated with the slow-growing pointed end of the new filament. Involved in intracellular vesicle transport along actin fibers, providing a novel link between actin cytoskeleton dynamics and intracellular transport. Required for asymmetric spindle positioning and asymmetric cell division during oocyte meiosis. Required for normal formation of the cleavage furrow and for polar body extrusion during female germ cell meiosis. Also acts in the nucleus: together with SPIRE1 and SPIRE2, promotes assembly of nuclear actin filaments in response to DNA damage in order to facilitate movement of chromatin and repair factors after DNA damage. The sequence is that of Protein spire homolog 2 (spire2) from Danio rerio (Zebrafish).